Here is a 264-residue protein sequence, read N- to C-terminus: Myozenin-2 (264 aa).

Arg53 is modified (omega-N-methylarginine). The interval 90–135 is disordered; that stretch reads GKVDGSNLEGGSQQAPLTPPNTPDPRSPPNPDNIAPGYSGPLKEIP. Ser101 carries the post-translational modification Phosphoserine. A compositionally biased stretch (pro residues) spans 106-120; it reads LTPPNTPDPRSPPNP. Phosphothreonine occurs at positions 107 and 111. Position 116 is a phosphoserine (Ser116).

Belongs to the myozenin family. Interacts via its C-terminus with spectrin repeats 3 and 4 of ACTN2. Interacts with ACTN1, LDB3, MYOT and PPP3CA.

The protein localises to the cytoplasm. It is found in the myofibril. The protein resides in the sarcomere. It localises to the z line. Functionally, myozenins may serve as intracellular binding proteins involved in linking Z line proteins such as alpha-actinin, gamma-filamin, TCAP/telethonin, LDB3/ZASP and localizing calcineurin signaling to the sarcomere. Plays an important role in the modulation of calcineurin signaling. May play a role in myofibrillogenesis. In Pongo abelii (Sumatran orangutan), this protein is Myozenin-2 (MYOZ2).